A 277-amino-acid chain; its full sequence is Type IV methyl-directed restriction enzyme EcoKMcrA (277 aa).

The 51-residue stretch at 207-257 (CENCGKNAPFYLNDGNPYLEVHHVIPLSSGGADTTDNCVALCPNCHRELHY) folds into the HNH domain.

Restriction of 5-methyl and 5-hydroxymethylcytosines at the specific DNA sequence 5'-C(me)CGG-3'. This chain is Type IV methyl-directed restriction enzyme EcoKMcrA, found in Escherichia coli (strain K12).